A 426-amino-acid polypeptide reads, in one-letter code: Glutamate-1-semialdehyde 2,1-aminomutase (426 aa).

K265 is modified (N6-(pyridoxal phosphate)lysine).

It belongs to the class-III pyridoxal-phosphate-dependent aminotransferase family. HemL subfamily. Homodimer. It depends on pyridoxal 5'-phosphate as a cofactor.

The protein resides in the cytoplasm. It catalyses the reaction (S)-4-amino-5-oxopentanoate = 5-aminolevulinate. It functions in the pathway porphyrin-containing compound metabolism; protoporphyrin-IX biosynthesis; 5-aminolevulinate from L-glutamyl-tRNA(Glu): step 2/2. This is Glutamate-1-semialdehyde 2,1-aminomutase from Salmonella enteritidis PT4 (strain P125109).